The sequence spans 548 residues: MADDHAAAADLVDGGRPEGDTHSREDGLSKPRDKDREREKDKDRERHRDRDRDRGRDRDRDKDKEKDRDKERDRDRDRDKDRDRHHRHHRERREHRDRSDDHDRHRSRDSERRRDHERDGRRRHRSRSRSRSRGRDRRSRSRSRSKSKRVSGFDMAPPAQAVVPQFPAIPTPSQFPGTAIPGMFPNMLPMGVGQFNPLVIQPQAMTQQATRHARRVYVGGLPPTANEQSVAIYFNQVMAAIGGNTAGPGDAVLNVYINHDKKFAFVEMRSVEEASNAMALDGILFEGAPVKVRRPTDYNPSLAAALGPSQPSPNLNLAAVGLTPGSAGGLEGPDRIFVGGLPYYFTEAQVRELLESFGPLRGFDLVKDRETGNSKGYAFCVYQDLNVTDIACAALNGIKMGDKTLTVRRANQGAAQPRPEQESILLQAQQQVQLQKLVYQVGALPTKVVCLTQVVSADELKDDEEYEDIMEDMRLEAGKYGNLIKVVIPRPDPSGLPVAGVGKVFLEYADVDGATKAKTAMHGRKFGGNPVVAVFYPENKFSSAEYDA.

Residues Met1–Arg82 show a composition bias toward basic and acidic residues. The tract at residues Met1 to Ala156 is disordered. Residues Asp83–Arg93 are compositionally biased toward basic residues. Residues Glu94–Gly120 show a composition bias toward basic and acidic residues. The span at Arg121–Arg149 shows a compositional bias: basic residues. RRM domains follow at residues Arg214–Asp297, Asp334–Gln412, and Gln453–Asn539.

The protein belongs to the splicing factor SR family.

The protein localises to the nucleus. Its function is as follows. Necessary for the splicing of pre-mRNA. This is Splicing factor U2af large subunit B (U2AF65B) from Oryza sativa subsp. japonica (Rice).